The primary structure comprises 60 residues: Ribosome modulation factor (60 aa).

This sequence belongs to the ribosome modulation factor family.

The protein resides in the cytoplasm. During stationary phase, converts 70S ribosomes to an inactive dimeric form (100S ribosomes). The polypeptide is Ribosome modulation factor (Kangiella koreensis (strain DSM 16069 / JCM 12317 / KCTC 12182 / SW-125)).